We begin with the raw amino-acid sequence, 393 residues long: NAD(P)H-quinone oxidoreductase subunit H, chloroplastic (393 aa).

The protein belongs to the complex I 49 kDa subunit family. As to quaternary structure, NDH is composed of at least 16 different subunits, 5 of which are encoded in the nucleus.

The protein resides in the plastid. Its subcellular location is the chloroplast thylakoid membrane. The catalysed reaction is a plastoquinone + NADH + (n+1) H(+)(in) = a plastoquinol + NAD(+) + n H(+)(out). It catalyses the reaction a plastoquinone + NADPH + (n+1) H(+)(in) = a plastoquinol + NADP(+) + n H(+)(out). Functionally, NDH shuttles electrons from NAD(P)H:plastoquinone, via FMN and iron-sulfur (Fe-S) centers, to quinones in the photosynthetic chain and possibly in a chloroplast respiratory chain. The immediate electron acceptor for the enzyme in this species is believed to be plastoquinone. Couples the redox reaction to proton translocation, and thus conserves the redox energy in a proton gradient. This Eucalyptus globulus subsp. globulus (Tasmanian blue gum) protein is NAD(P)H-quinone oxidoreductase subunit H, chloroplastic.